Reading from the N-terminus, the 536-residue chain is Lipid scramblase CLPTM1L (536 aa).

At 1–9 (MLSRSSFTS) the chain is on the cytoplasmic side. Residues 10–30 (LAVGVFAVYVAHTCWVMYGIV) traverse the membrane as a helical segment. Residues 31-284 (YTRPCPSGGA…VKGIFVDTNL (254 aa)) lie on the Extracellular side of the membrane. 3 N-linked (GlcNAc...) asparagine glycosylation sites follow: asparagine 92, asparagine 102, and asparagine 229. A helical membrane pass occupies residues 285–305 (YFLALTFFVAAFHLLFDFLAF). The Cytoplasmic segment spans residues 306 to 324 (KNDISFWKKKRSMIGMSTK). A helical membrane pass occupies residues 325–342 (AVLWRCFSTVVIFLFLLD). Topologically, residues 343–346 (EQTS) are extracellular. The helical transmembrane segment at 347 to 364 (LLVLIPAGIGAVIELWKV) threads the bilayer. Residues 365–402 (KKALKMTVKWQGIRPKVQFGASNDSEKKTEEYDTQAMK) are Cytoplasmic-facing. A helical transmembrane segment spans residues 403–423 (YLSYLLYPLCIGGAAYSLLNV). Residues 424–428 (KYKSW) lie on the Extracellular side of the membrane. The helical transmembrane segment at 429 to 449 (YSWLINSFVNGVYAFGFLFML) threads the bilayer. The Cytoplasmic segment spans residues 450–536 (PQLFVNYKMK…YEEKPKKKSS (87 aa)).

Belongs to the CLPTM1 family.

It localises to the endoplasmic reticulum membrane. The catalysed reaction is a 6-(alpha-D-glucosaminyl)-1-(1,2-diacyl-sn-glycero-3-phospho)-1D-myo-inositol(in) = a 6-(alpha-D-glucosaminyl)-1-(1,2-diacyl-sn-glycero-3-phospho)-1D-myo-inositol(out). The enzyme catalyses 6-(alpha-D-glucosaminyl)-(1-octadecanoyl,2-(9Z)-octadecenoyl-sn-glycero-3-phospho)-1D-myo-inositol(in) = 6-(alpha-D-glucosaminyl)-(1-octadecanoyl,2-(9Z)-octadecenoyl-sn-glycero-3-phospho)-1D-myo-inositol(out). It carries out the reaction a 1,2-diacyl-sn-glycero-3-phospho-(1D-myo-inositol)(in) = a 1,2-diacyl-sn-glycero-3-phospho-(1D-myo-inositol)(out). It catalyses the reaction a 1,2-diacyl-sn-glycero-3-phosphocholine(in) = a 1,2-diacyl-sn-glycero-3-phosphocholine(out). The catalysed reaction is a 1,2-diacyl-sn-glycero-3-phosphoethanolamine(in) = a 1,2-diacyl-sn-glycero-3-phosphoethanolamine(out). In terms of biological role, scramblase that mediates the translocation of glucosaminylphosphatidylinositol (alpha-D-GlcN-(1-6)-(1,2-diacyl-sn-glycero-3-phospho)-1D-myo-inositol, GlcN-PI) across the endoplasmic reticulum (ER) membrane, from the cytosolic leaflet to the luminal leaflet of the ER membrane, where it participates in the biosynthesis of glycosylphosphatidylinositol (GPI). GPI is a lipid glycoconjugate involved in post-translational modification of proteins. Can also translocate 1,2-diacyl-sn-glycero-3-phospho-(1D-myo-inositol) (phosphatidylinositol or PI), as well as several other phospholipids (1,2-diacyl-sn-glycero-3-phosphocholine, 1,2-diacyl-sn-glycero-3-phosphoethanolamine), and N-acetylglucosaminylphosphatidylinositol (GlcNAc-PI) in vitro. The polypeptide is Lipid scramblase CLPTM1L (CLPTM1L) (Gallus gallus (Chicken)).